The sequence spans 85 residues: Phosphocarrier protein HPr (85 aa).

The HPr domain occupies 1–85 (MYSKDVEIIA…HLVALIPTLE (85 aa)). The active-site Pros-phosphohistidine intermediate is H15.

Belongs to the HPr family.

It localises to the cytoplasm. Functionally, general (non sugar-specific) component of the phosphoenolpyruvate-dependent sugar phosphotransferase system (sugar PTS). This major carbohydrate active-transport system catalyzes the phosphorylation of incoming sugar substrates concomitantly with their translocation across the cell membrane. The phosphoryl group from phosphoenolpyruvate (PEP) is transferred to the phosphoryl carrier protein HPr by enzyme I. Phospho-HPr then transfers it to the PTS EIIA domain. The protein is Phosphocarrier protein HPr (ptsH) of Haemophilus influenzae (strain ATCC 51907 / DSM 11121 / KW20 / Rd).